The primary structure comprises 136 residues: ATP synthase epsilon chain (136 aa).

Belongs to the ATPase epsilon chain family. In terms of assembly, F-type ATPases have 2 components, CF(1) - the catalytic core - and CF(0) - the membrane proton channel. CF(1) has five subunits: alpha(3), beta(3), gamma(1), delta(1), epsilon(1). CF(0) has three main subunits: a, b and c.

The protein localises to the cell membrane. Produces ATP from ADP in the presence of a proton gradient across the membrane. The sequence is that of ATP synthase epsilon chain from Macrococcus caseolyticus (strain JCSC5402) (Macrococcoides caseolyticum).